The chain runs to 624 residues: Altered inheritance of mitochondria protein 9, mitochondrial (624 aa).

The transit peptide at 1 to 34 directs the protein to the mitochondrion; it reads MLSRVARCSRTLNQVTRNGQSGLFSAVLRTSIRQ.

Belongs to the AIM9 family.

It localises to the mitochondrion. This is Altered inheritance of mitochondria protein 9, mitochondrial (AIM9) from Candida albicans (strain WO-1) (Yeast).